A 226-amino-acid chain; its full sequence is Large ribosomal subunit protein uL1 (226 aa).

Belongs to the universal ribosomal protein uL1 family. As to quaternary structure, part of the 50S ribosomal subunit.

In terms of biological role, binds directly to 23S rRNA. The L1 stalk is quite mobile in the ribosome, and is involved in E site tRNA release. Protein L1 is also a translational repressor protein, it controls the translation of the L11 operon by binding to its mRNA. The polypeptide is Large ribosomal subunit protein uL1 (Borrelia garinii subsp. bavariensis (strain ATCC BAA-2496 / DSM 23469 / PBi) (Borreliella bavariensis)).